Reading from the N-terminus, the 440-residue chain is 3-phosphoshikimate 1-carboxyvinyltransferase (440 aa).

3-phosphoshikimate is bound by residues K25, S26, and R30. A phosphoenolpyruvate-binding site is contributed by K25. Positions 96 and 124 each coordinate phosphoenolpyruvate. Residues S168, Q169, D310, and K337 each contribute to the 3-phosphoshikimate site. Phosphoenolpyruvate is bound at residue Q169. The active-site Proton acceptor is the D310. Phosphoenolpyruvate contacts are provided by R341, R382, and K409.

It belongs to the EPSP synthase family. Monomer.

It localises to the cytoplasm. The enzyme catalyses 3-phosphoshikimate + phosphoenolpyruvate = 5-O-(1-carboxyvinyl)-3-phosphoshikimate + phosphate. It participates in metabolic intermediate biosynthesis; chorismate biosynthesis; chorismate from D-erythrose 4-phosphate and phosphoenolpyruvate: step 6/7. Functionally, catalyzes the transfer of the enolpyruvyl moiety of phosphoenolpyruvate (PEP) to the 5-hydroxyl of shikimate-3-phosphate (S3P) to produce enolpyruvyl shikimate-3-phosphate and inorganic phosphate. In Chlamydia trachomatis serovar D (strain ATCC VR-885 / DSM 19411 / UW-3/Cx), this protein is 3-phosphoshikimate 1-carboxyvinyltransferase.